Here is a 315-residue protein sequence, read N- to C-terminus: Intradiol ring-cleavage dioxygenase prcA (315 aa).

Residues Tyr166, Tyr200, His224, and His226 each coordinate Fe cation. The interval 287–315 (KKHHPNPNSAPPVSSFERFNKASKTQEKL) is disordered. The span at 304 to 315 (RFNKASKTQEKL) shows a compositional bias: basic and acidic residues.

The protein belongs to the intradiol ring-cleavage dioxygenase family. As to quaternary structure, homodimer. The cofactor is Fe(3+).

The catalysed reaction is 3,4-dihydroxybenzoate + O2 = 3-carboxy-cis,cis-muconate + 2 H(+). Intradiol ring-cleavage dioxygenase; part of the benzoic acid degradation pathway also known as the protocatechuic acid pathway. Benzoic acid debradation begins with the conversion of benzoic acid into 4-hydroxybenzoic acid through hydroxylation by the benzoate-4-monooxygenase bphA, and its partner NADPH-cytochrome P450 reductase cprA which act as a mediator in electron donation from NADPH. 4-Hydroxybenzoic acid is then converted into 3,4-dihydroxybenzoic acid (also called protocatechuic acid) by the p-hydroxybenzoate-m-hydroxylase phhA. Protocatechuic acid is converted into 3-carboxy-cis,cis-muconic acid by the intradiol ring-cleavage dioxygenase prcA, which is further metabolized through the 3-oxoadipate pathway to finally enter the tricarboxylic acid cycle (TCA). The sequence is that of Intradiol ring-cleavage dioxygenase prcA from Aspergillus niger (strain ATCC MYA-4892 / CBS 513.88 / FGSC A1513).